Consider the following 242-residue polypeptide: Probable transcriptional regulatory protein Cphy_2507 (242 aa).

The protein belongs to the TACO1 family.

The protein resides in the cytoplasm. In Lachnoclostridium phytofermentans (strain ATCC 700394 / DSM 18823 / ISDg) (Clostridium phytofermentans), this protein is Probable transcriptional regulatory protein Cphy_2507.